The chain runs to 213 residues: Na(+)-translocating NADH-quinone reductase subunit D (213 aa).

The next 7 membrane-spanning stretches (helical) occupy residues 21 to 41 (PLIA…VNTA), 42 to 62 (LTMG…VSLL), 77 to 97 (IIIS…FFDI), 101 to 121 (LSVF…AESL), 131 to 151 (FLDG…VSII), 153 to 173 (EFFG…FYAS), and 183 to 203 (FGLM…IWGV).

This sequence belongs to the NqrDE/RnfAE family. Composed of six subunits; NqrA, NqrB, NqrC, NqrD, NqrE and NqrF.

It is found in the cell inner membrane. It carries out the reaction a ubiquinone + n Na(+)(in) + NADH + H(+) = a ubiquinol + n Na(+)(out) + NAD(+). Functionally, NQR complex catalyzes the reduction of ubiquinone-1 to ubiquinol by two successive reactions, coupled with the transport of Na(+) ions from the cytoplasm to the periplasm. NqrA to NqrE are probably involved in the second step, the conversion of ubisemiquinone to ubiquinol. This Chlamydia abortus (strain DSM 27085 / S26/3) (Chlamydophila abortus) protein is Na(+)-translocating NADH-quinone reductase subunit D.